The chain runs to 152 residues: Protein Smg homolog (152 aa).

This sequence belongs to the Smg family.

This chain is Protein Smg homolog, found in Chromobacterium violaceum (strain ATCC 12472 / DSM 30191 / JCM 1249 / CCUG 213 / NBRC 12614 / NCIMB 9131 / NCTC 9757 / MK).